A 92-amino-acid polypeptide reads, in one-letter code: Small ribosomal subunit protein uS19 (92 aa).

Belongs to the universal ribosomal protein uS19 family.

In terms of biological role, protein S19 forms a complex with S13 that binds strongly to the 16S ribosomal RNA. The sequence is that of Small ribosomal subunit protein uS19 from Borrelia recurrentis (strain A1).